The chain runs to 144 residues: Deoxyuridine 5'-triphosphate nucleotidohydrolase (144 aa).

Residues serine 66, arginine 133, phenylalanine 138, and glycine 139 each coordinate dUMP.

The protein belongs to the dUTPase family. In terms of assembly, homotrimer. Requires Mg(2+) as cofactor.

The enzyme catalyses dUTP + H2O = dUMP + diphosphate + H(+). It functions in the pathway pyrimidine metabolism; dUMP biosynthesis; dUMP from dCTP (dUTP route): step 2/2. In terms of biological role, involved in nucleotide metabolism via production of dUMP, the immediate precursor of thymidine nucleotides, and decreases the intracellular concentration of dUTP so that uracil cannot be incorporated into DNA. The chain is Deoxyuridine 5'-triphosphate nucleotidohydrolase (DUT1) from Encephalitozoon cuniculi (strain GB-M1) (Microsporidian parasite).